A 224-amino-acid polypeptide reads, in one-letter code: DNA repair and recombination protein RadB (224 aa).

It belongs to the eukaryotic RecA-like protein family. RadB subfamily.

In terms of biological role, involved in DNA repair and in homologous recombination. May regulate the cleavage reactions of the branch-structured DNA. Has a very weak ATPase activity that is not stimulated by DNA. Binds DNA but does not promote DNA strands exchange. The polypeptide is DNA repair and recombination protein RadB (Methanoculleus marisnigri (strain ATCC 35101 / DSM 1498 / JR1)).